The sequence spans 962 residues: Glycine dehydrogenase (decarboxylating) (962 aa).

At Lys-709 the chain carries N6-(pyridoxal phosphate)lysine.

The protein belongs to the GcvP family. As to quaternary structure, the glycine cleavage system is composed of four proteins: P, T, L and H. Requires pyridoxal 5'-phosphate as cofactor.

It carries out the reaction N(6)-[(R)-lipoyl]-L-lysyl-[glycine-cleavage complex H protein] + glycine + H(+) = N(6)-[(R)-S(8)-aminomethyldihydrolipoyl]-L-lysyl-[glycine-cleavage complex H protein] + CO2. The glycine cleavage system catalyzes the degradation of glycine. The P protein binds the alpha-amino group of glycine through its pyridoxal phosphate cofactor; CO(2) is released and the remaining methylamine moiety is then transferred to the lipoamide cofactor of the H protein. The sequence is that of Glycine dehydrogenase (decarboxylating) from Shewanella baltica (strain OS195).